Reading from the N-terminus, the 446-residue chain is White-opaque regulator 2 (446 aa).

The segment covering 1 to 24 (MTQLPSVSELINRTGSIGSSSNIT) has biased composition (polar residues). Residues 1–203 (MTQLPSVSEL…QPNFPYHNNF (203 aa)) form a disordered region. A compositionally biased stretch (low complexity) spans 30–64 (TTTSATNTTTAATATTVTSTTPRSENSYSPNSPYS). Positions 67-86 (TRPSNTSLTNYSAGSGITVA) are enriched in polar residues. Low complexity-rich tracts occupy residues 87–97 (SSSFQFSQPSP) and 104–120 (STSSQSSSGDSFQQHQS). The span at 121 to 144 (NPSGVSMSSNTSPRTSIVQSMSSV) shows a compositional bias: polar residues. A compositionally biased stretch (pro residues) spans 166–184 (VQPPPQQQQLQQPPPPPPQ). A compositionally biased stretch (low complexity) spans 185–195 (QQQHIYPQQQP). Positions 305–332 (CLTCRKRRIKCDERKPTCFNCERSKKSC) form a DNA-binding region, zn(2)-C6 fungal-type. Residues 336–402 (QDLSKLPPRK…SGSSTNSRNL (67 aa)) are disordered. The segment covering 358-369 (NQQQQQQQQNQQ) has biased composition (low complexity). Polar residues predominate over residues 387 to 401 (HQITSISGSSTNSRN).

Its subcellular location is the nucleus. Its function is as follows. Transcriptional regulator of the switch between 2 heritable states, the white and opaque states. These 2 cell types differ in many characteristics, including cell structure, mating competence, and virulence. Each state is heritable for many generations, and switching between states occurs stochastically, at low frequency. WOR2 is necessary for the stability of the opaque state phenotypic switching from the white to the opaque phase is a necessary step for mating. Plays a role in cell adhesion and pseudohyphal growth. The sequence is that of White-opaque regulator 2 (WOR2) from Candida albicans (strain SC5314 / ATCC MYA-2876) (Yeast).